We begin with the raw amino-acid sequence, 203 residues long: Thymidylate kinase (203 aa).

An ATP-binding site is contributed by 9 to 16 (GPEGAGKT).

This sequence belongs to the thymidylate kinase family.

The enzyme catalyses dTMP + ATP = dTDP + ADP. In terms of biological role, phosphorylation of dTMP to form dTDP in both de novo and salvage pathways of dTTP synthesis. This chain is Thymidylate kinase, found in Staphylococcus epidermidis (strain ATCC 35984 / DSM 28319 / BCRC 17069 / CCUG 31568 / BM 3577 / RP62A).